The primary structure comprises 442 residues: GTPase Der (442 aa).

2 consecutive EngA-type G domains span residues proline 4–asparagine 169 and isoleucine 178–threonine 353. GTP-binding positions include glycine 10–serine 17, aspartate 57–leucine 61, asparagine 121–glutamate 124, glycine 184–serine 191, aspartate 231–methionine 235, and asparagine 296–aspartate 299. The KH-like domain maps to arginine 354–glutamate 438.

Belongs to the TRAFAC class TrmE-Era-EngA-EngB-Septin-like GTPase superfamily. EngA (Der) GTPase family. Associates with the 50S ribosomal subunit.

In terms of biological role, GTPase that plays an essential role in the late steps of ribosome biogenesis. This chain is GTPase Der, found in Heliobacterium modesticaldum (strain ATCC 51547 / Ice1).